Here is a 140-residue protein sequence, read N- to C-terminus: UPF0102 protein Ppro_1186 (140 aa).

The disordered stretch occupies residues 1–27; the sequence is MKRPGDGRQESPSSTARPDNRNTGSRG. Polar residues predominate over residues 10 to 25; the sequence is ESPSSTARPDNRNTGS.

The protein belongs to the UPF0102 family.

The chain is UPF0102 protein Ppro_1186 from Pelobacter propionicus (strain DSM 2379 / NBRC 103807 / OttBd1).